The chain runs to 393 residues: uncharacterized protein (393 aa).

The B box-type zinc-finger motif lies at 6–47 (KYDNKCAIHKEHKIKMICATCKDVVCNECILLDHNGHKFGRI). Zn(2+) contacts are provided by Cys-11, His-14, Cys-34, and His-39.

This is an uncharacterized protein from Dictyostelium discoideum (Social amoeba).